A 2769-amino-acid polypeptide reads, in one-letter code: Teneurin-4 (2769 aa).

Residues 1-22 (MDVKERKPYRSLTRRRDAERRY) are compositionally biased toward basic and acidic residues. The segment at 1–45 (MDVKERKPYRSLTRRRDAERRYTSSSADSEEGKAPQKSYSSSETL) is disordered. The region spanning 1–341 (MDVKERKPYR…KPSKYCNWKC (341 aa)) is the Teneurin N-terminal domain. The Cytoplasmic portion of the chain corresponds to 1–345 (MDVKERKPYR…YCNWKCAALS (345 aa)). S124 is subject to Phosphoserine. The segment at 130–233 (RLWGRSTRSG…PPAGGAQEPA (104 aa)) is disordered. A compositionally biased stretch (low complexity) spans 134–155 (RSTRSGRSSCLSSRANSNLTLT). The span at 156–166 (DTEHENTETDH) shows a compositional bias: basic and acidic residues. Residue T178 is modified to Phosphothreonine. Polar residues predominate over residues 187-211 (HTPNQHHAASINSLNRGNFTPRSNP). A helical transmembrane segment spans residues 346-366 (AIVISATLVILLAYFVAMHLF). Residues 367-2769 (GLNWHLQPME…FMRQSEMGRR (2403 aa)) are Extracellular-facing. Positions 400–426 (PSGGTGLETPDRKGKGTTEGKPSSFFP) are disordered. Residues 408 to 417 (TPDRKGKGTT) are compositionally biased toward basic and acidic residues. N-linked (GlcNAc...) asparagine glycosylation is present at N467. The tract at residues 507–526 (ARSLEGTPRQSRGTVPPSSH) is disordered. Over residues 514–526 (PRQSRGTVPPSSH) the composition is skewed to polar residues. EGF-like domains lie at 562-593 (SVDN…PDCG), 594-624 (RASC…AECD), 626-658 (PTNQ…ESCE), 659-690 (EVDC…TNCE), 692-725 (PRAT…HDCS), 726-757 (IEIC…ACDQ), 758-787 (RACH…EHCT), and 788-831 (IAHY…AGCD). 22 disulfide bridges follow: C566–C576, C570–C581, C583–C592, C601–C612, C614–C623, C630–C641, C635–C646, C648–C657, C662–C673, C667–C678, C680–C689, C700–C713, C715–C724, C729–C739, C733–C744, C746–C755, C760–C770, C764–C775, C777–C786, C800–C810, C804–C819, and C821–C830. N940 and N1259 each carry an N-linked (GlcNAc...) asparagine glycan. NHL repeat units follow at residues 1216-1259 (SCPS…PSGN), 1264-1308 (LELR…IKST), 1334-1378 (TRCG…NGII), 1393-1444 (LSCD…VAGR), and 1523-1566 (CFSG…IRKN). Residues 1576–1595 (YELSSPIDQELYLFDTTGKH) form a YD 1 repeat. N-linked (GlcNAc...) asparagine glycosylation is present at N1609. YD repeat units follow at residues 1612–1632 (YTGD…VNVR), 1675–1694 (YHGN…WTTF), and 1695–1717 (YEYD…SSFR). N1705, N1741, N1799, and N1884 each carry an N-linked (GlcNAc...) asparagine glycan. YD repeat units follow at residues 1887–1906 (YSPG…ERME), 1928–1946 (YLEK…YIFE), 1947–1967 (FDKN…QTLE), 1974–1991 (YYRN…VIQD), 1992–2013 (FTED…VIYK), 2014–2031 (YGKL…TKVS), 2034–2054 (YDET…FTCT), 2057–2077 (YRQI…EGMV), 2085–2104 (YDNS…TPLP), 2110–2127 (YDDV…GVIY), 2128–2154 (YDIN…MKEV), 2156–2169 (YEIF…MTVQ), 2170–2193 (YDNM…TRYS), 2196–2216 (YDAD…WRYS), 2217–2237 (YDLN…LTPL), 2239–2259 (YDIR…DEDG), 2271–2291 (YNSA…SVRY), and 2293–2313 (YDGL…LQFF). N-linked (GlcNAc...) asparagine glycosylation occurs at N1985. The N-linked (GlcNAc...) asparagine glycan is linked to N2188. N-linked (GlcNAc...) asparagine glycosylation is present at N2328. Residues 2339–2380 (YDLQGHLFAMELSSGDEFYIACDNIGTPLAVFSGTGLMIKQI) form a YD 23 repeat. N-linked (GlcNAc...) asparagine glycosylation is present at N2646.

It belongs to the tenascin family. Teneurin subfamily. In terms of assembly, homodimer; disulfide-linked. May also form heterodimer with either TENM1 or TENM2 or TENM3.

It is found in the cell membrane. The protein resides in the cell projection. Its subcellular location is the nucleus. It localises to the cytoplasm. Involved in neural development, regulating the establishment of proper connectivity within the nervous system. Plays a role in the establishment of the anterior-posterior axis during gastrulation. Regulates the differentiation and cellular process formation of oligodendrocytes and myelination of small-diameter axons in the central nervous system (CNS). Promotes activation of focal adhesion kinase. May function as a cellular signal transducer. In Homo sapiens (Human), this protein is Teneurin-4 (TENM4).